The primary structure comprises 148 residues: UPAR/Ly6 domain-containing protein bero (148 aa).

The N-terminal stretch at 1 to 23 (MVSALKCSLAVAVMISLACSAYA) is a signal peptide. 5 cysteine pairs are disulfide-bonded: C26/C72, C29/C37, C51/C90, C102/C116, and C119/C124. N68 carries an N-linked (GlcNAc...) asparagine glycan. A glycan (N-linked (GlcNAc...) asparagine) is linked at N125. Residue N125 is the site of GPI-anchor amidated asparagine attachment. The propeptide at 126–148 (GSSSLAPIAGAILLFFGVARLLA) is removed in mature form. The chain crosses the membrane as a helical span at residues 128–148 (SSLAPIAGAILLFFGVARLLA).

Belongs to the quiver family.

It localises to the cell membrane. The protein localises to the membrane. The protein resides in the perikaryon. Its subcellular location is the cell projection. It is found in the neuron projection. Its function is as follows. Necessary for the maintenance of persistent fluctuating activities and suppression of acute evoked activities in abdominal leucokinin-producing (ABLK) neurons to negatively regulate neuron excitability involved in nociceptive (perception of pain) behavioral responses. The sequence is that of UPAR/Ly6 domain-containing protein bero from Drosophila melanogaster (Fruit fly).